A 109-amino-acid polypeptide reads, in one-letter code: YLTEISGKGHIEIVKCLVNLGANITTNNNYAIIQASEKGHLEVVKYLVGQNANIRSENNLAVRLASGNGHLEVVEYLVNLGADIRSENNYAIQSASQNGHLEVIEYLVA.

ANK repeat units follow at residues 1–26 (YLTE…NITT), 27–56 (NNNY…NIRS), 57–86 (ENNL…DIRS), and 88–109 (NNYA…YLVA).

The sequence is that of Putative ankyrin repeat protein L482 from Acanthamoeba polyphaga (Amoeba).